We begin with the raw amino-acid sequence, 299 residues long: MISNNRLRIAMQKTGRLSDDSKDLLTRCGIKINLHKQKLIAFAENMPIDVMCVRDDDIPGLVMDKVVDIGIIGENVLEEEVLNRQVQLDNCSYTKLKRLDFGICRLSLAVPINIEYNNIHCLNHTRIATSYPHLLKRYCDKKKLTFKSCMLNGSVEVAPRAGLSDAICDLVSTGATLEANGLREVEVIFFSKACVICKTGFISLEKKNVIDKLMTRIQGVIKARESKYIMLHAPIEKLEKVMNLLHGAENPTILKLAGDNTRVAMHMVSSETLFWETMEKLKLLGASSILVLPIEKMME.

It belongs to the ATP phosphoribosyltransferase family. Long subfamily. As to quaternary structure, equilibrium between an active dimeric form, an inactive hexameric form and higher aggregates. Interconversion between the various forms is largely reversible and is influenced by the natural substrates and inhibitors of the enzyme. It depends on Mg(2+) as a cofactor.

It localises to the cytoplasm. The catalysed reaction is 1-(5-phospho-beta-D-ribosyl)-ATP + diphosphate = 5-phospho-alpha-D-ribose 1-diphosphate + ATP. The protein operates within amino-acid biosynthesis; L-histidine biosynthesis; L-histidine from 5-phospho-alpha-D-ribose 1-diphosphate: step 1/9. With respect to regulation, feedback inhibited by histidine. Catalyzes the condensation of ATP and 5-phosphoribose 1-diphosphate to form N'-(5'-phosphoribosyl)-ATP (PR-ATP). Has a crucial role in the pathway because the rate of histidine biosynthesis seems to be controlled primarily by regulation of HisG enzymatic activity. The sequence is that of ATP phosphoribosyltransferase from Buchnera aphidicola subsp. Baizongia pistaciae (strain Bp).